The chain runs to 324 residues: Cyclin-dependent kinase 1 (324 aa).

A Protein kinase domain is found at 4–307 (YQKIEKIGEG…AKQACMHPYF (304 aa)). Residues 10 to 18 (IGEGTYGVV) and Lys34 contribute to the ATP site. At Thr14 the chain carries Phosphothreonine. Tyr15 carries the phosphotyrosine modification. The Proton acceptor role is filled by Asp148. The residue at position 181 (Thr181) is a Phosphothreonine; by CAK.

The protein belongs to the protein kinase superfamily. CMGC Ser/Thr protein kinase family. CDC2/CDKX subfamily. In terms of assembly, forms a stable but non-covalent complex with a regulatory subunit (SUC1) and with a cyclin.

It carries out the reaction L-seryl-[protein] + ATP = O-phospho-L-seryl-[protein] + ADP + H(+). It catalyses the reaction L-threonyl-[protein] + ATP = O-phospho-L-threonyl-[protein] + ADP + H(+). With respect to regulation, phosphorylation at Thr-14 or Tyr-15 inactivates the enzyme, while phosphorylation at Thr-181 activates it. In terms of biological role, cyclin-dependent kinase that acts as a master regulator of the mitotic and meiotic cell cycles. The sequence is that of Cyclin-dependent kinase 1 from Ajellomyces capsulatus (Darling's disease fungus).